A 619-amino-acid chain; its full sequence is Kinesin light chain 4 (619 aa).

Ser2 is modified (N-acetylserine). Residues 32-150 (GLESLHSEHQ…EEEKKHLEFL (119 aa)) adopt a coiled-coil conformation. One copy of the TPR 1 repeat lies at 55 to 88 (QQGGHEEGLVHEKARQLRRSMENIELGLSEAQVM). Basic and acidic residues predominate over residues 156-175 (YDEDGHSMEEKEGDASKDSL). Residues 156–200 (YDEDGHSMEEKEGDASKDSLDDLFPNEEEEDSSNDLSRGQGAAAA) form a disordered region. The residue at position 174 (Ser174) is a Phosphoserine. The segment covering 179–188 (FPNEEEEDSS) has biased composition (acidic residues). 5 TPR repeats span residues 211–244 (LRTLHNLVIQYAAQGRYEVAVPLCKQALEDLERT), 253–286 (ATMLNILALVYRDQNKYKEAAHLLNDALSIREST), 295–328 (AATLNNLAVLYGKRGKYKEAEPLCQRALEIREKV), 337–370 (AKQLNNLALLCQNQGKYEAVERYYQRALAIYERQ), and 379–412 (ARTKNNLASCYLKQGKYSEAETLYKEILTRAHVQ). Position 460 is a phosphoserine (Ser460). One copy of the TPR 7 repeat lies at 464-497 (NTTLRNLGALYRRQGKLEAAETLEECALRSRKQG). Ser565, Ser566, and Ser590 each carry phosphoserine. Residues 571 to 619 (RKLQGTEPRPSSSNMKRAASLNYLNQPNAAPLQTSRGLSASTVDLSSSS) are disordered. A compositionally biased stretch (polar residues) spans 592–608 (NYLNQPNAAPLQTSRGL). Residues 609 to 619 (SASTVDLSSSS) show a composition bias toward low complexity. At Thr612 the chain carries Phosphothreonine.

Belongs to the kinesin light chain family. In terms of assembly, oligomeric complex composed of two heavy chains and two light chains.

The protein localises to the cytoplasm. The protein resides in the cytoskeleton. In terms of biological role, kinesin is a microtubule-associated force-producing protein that may play a role in organelle transport. The light chain may function in coupling of cargo to the heavy chain or in the modulation of its ATPase activity. The protein is Kinesin light chain 4 (Klc4) of Rattus norvegicus (Rat).